The following is a 533-amino-acid chain: (E)-beta-farnesene synthase (533 aa).

Mg(2+) is bound by residues Asp286 and Asp290. Substrate-binding residues include Asp286, Asp290, Arg427, and Asn430. Residues 286-290 (DDMMD) carry the DDXXD motif motif. 2 residues coordinate Mg(2+): Asn430 and Glu438.

It belongs to the terpene synthase family. As to quaternary structure, monomer. The cofactor is Mg(2+). Mn(2+) is required as a cofactor.

It localises to the cytoplasm. It carries out the reaction (2E,6E)-farnesyl diphosphate = (E)-beta-farnesene + diphosphate. The catalysed reaction is (2E,6E)-farnesyl diphosphate = alpha-copaene + diphosphate. The enzyme catalyses (2E,6E)-farnesyl diphosphate = (1S,5S,6R)-alpha-bergamotene + diphosphate. It catalyses the reaction (2E,6E)-farnesyl diphosphate = (-)-(E)-beta-caryophyllene + diphosphate. It carries out the reaction (2E,6E)-farnesyl diphosphate = delta-cadinene + diphosphate. The catalysed reaction is (2E,6E)-farnesyl diphosphate = (+)-germacrene D + diphosphate. The enzyme catalyses (2E,6E)-farnesyl diphosphate = alpha-zingiberene + diphosphate. It catalyses the reaction (2E,6E)-farnesyl diphosphate = alpha-muurolene + diphosphate. It carries out the reaction (2E,6E)-farnesyl diphosphate = (S)-beta-bisabolene + diphosphate. The catalysed reaction is (2E,6E)-farnesyl diphosphate = beta-sesquiphellandrene + diphosphate. The enzyme catalyses (2E,6E)-farnesyl diphosphate = sesquisabinene A + diphosphate. The protein operates within secondary metabolite biosynthesis; terpenoid biosynthesis. In terms of biological role, sesquiterpene cyclase catalyzing mainly the production of beta-farnesene and alpha-bergamotene in equal amounts from farnesyl diphosphate. Also mediates the biosynthesis of minor sesquiterpene hydrocarbons including alpha-muurolene, beta-bisabolene, zingiberene, sesquiphellandrene, sesquisabinene A, germacrene D, delta-cadinene, alpha-copaene and (E)-beta-caryophyllene. Involved in indirect defense by producing volatile signals attracting natural enemies of herbivores. This Zea mays (Maize) protein is (E)-beta-farnesene synthase.